The following is a 443-amino-acid chain: Thymidine phosphorylase (443 aa).

The protein belongs to the thymidine/pyrimidine-nucleoside phosphorylase family. As to quaternary structure, homodimer.

It carries out the reaction thymidine + phosphate = 2-deoxy-alpha-D-ribose 1-phosphate + thymine. It participates in pyrimidine metabolism; dTMP biosynthesis via salvage pathway; dTMP from thymine: step 1/2. The enzymes which catalyze the reversible phosphorolysis of pyrimidine nucleosides are involved in the degradation of these compounds and in their utilization as carbon and energy sources, or in the rescue of pyrimidine bases for nucleotide synthesis. This Shewanella pealeana (strain ATCC 700345 / ANG-SQ1) protein is Thymidine phosphorylase.